The chain runs to 194 residues: Oligoribonuclease (194 aa).

The Exonuclease domain occupies 11–174 (LIWIDLEMTG…SDVRDSIDEL (164 aa)). The active site involves Tyr-132.

The protein belongs to the oligoribonuclease family.

The protein resides in the cytoplasm. Its function is as follows. 3'-to-5' exoribonuclease specific for small oligoribonucleotides. In Xanthomonas euvesicatoria pv. vesicatoria (strain 85-10) (Xanthomonas campestris pv. vesicatoria), this protein is Oligoribonuclease.